A 270-amino-acid polypeptide reads, in one-letter code: 3-methyl-2-oxobutanoate hydroxymethyltransferase (270 aa).

2 residues coordinate Mg(2+): aspartate 50 and aspartate 89. Residues 50–51 (DS), aspartate 89, and lysine 118 each bind 3-methyl-2-oxobutanoate. Residue glutamate 120 coordinates Mg(2+). Glutamate 187 acts as the Proton acceptor in catalysis.

This sequence belongs to the PanB family. Homodecamer; pentamer of dimers. Mg(2+) serves as cofactor.

The protein resides in the cytoplasm. It catalyses the reaction 3-methyl-2-oxobutanoate + (6R)-5,10-methylene-5,6,7,8-tetrahydrofolate + H2O = 2-dehydropantoate + (6S)-5,6,7,8-tetrahydrofolate. It participates in cofactor biosynthesis; (R)-pantothenate biosynthesis; (R)-pantoate from 3-methyl-2-oxobutanoate: step 1/2. In terms of biological role, catalyzes the reversible reaction in which hydroxymethyl group from 5,10-methylenetetrahydrofolate is transferred onto alpha-ketoisovalerate to form ketopantoate. The protein is 3-methyl-2-oxobutanoate hydroxymethyltransferase of Helicobacter pylori (strain Shi470).